The sequence spans 254 residues: Zinc transporter GufA (254 aa).

Helical transmembrane passes span 4-24, 74-94, 112-132, 143-163, 176-196, 198-218, and 234-254; these read GLVA…PVLV, VAAG…LMPH, ALLF…AVGV, LSVA…VALA, FLAL…VLAL, LSSA…LYVI, and EATT…MSLG. N123, E126, Q152, N153, E156, and E185 together coordinate Zn(2+).

The protein belongs to the ZIP transporter (TC 2.A.5) family. In terms of assembly, homodimer.

It localises to the cell inner membrane. Its function is as follows. Mediates the uptake of Zn(2+). This Myxococcus xanthus protein is Zinc transporter GufA (gufA).